The chain runs to 116 residues: Putative BPES syndrome breakpoint region protein (116 aa).

As to expression, seems to be expressed only in testis.

This chain is Putative BPES syndrome breakpoint region protein (BPESC1), found in Homo sapiens (Human).